The following is a 492-amino-acid chain: MYLILSLIIFLAYVAFHKKRTNGMPPGPFPLPIIGNLHQLGKSPYKSLKSFSDKYGGLTTIFLGSVPTVLISEPNILREIIIKNNDSIIDRYISDSGLIIGGERNLLFSKGSFWIKYRKIFSSAMTNARKFNIASRIEQQAISLNNYFGTYANSKQAINPHDYIRRYSLNGVIDYSFSDSVEYESDTHHIVIRAAEIMEEILATGNPHDYLPFLKPFYTKKRNTLAMAVGQVWDYCNDAITVHRKTLDHEKPRDLLDLILMEIEKSEEKQFYDDDSLSKCLTDLIVAGHETVAITLGWMILFLSNHQDVQQKVYDELINVVGKGNLPALVHRKDTSYLNACIQETMRIRTAAPLALPRIASEDIKVGGYTIPKGTQVMMSVYGMASDERYWKDPHIFNPERWLSSNHSTENGGGGGGVVGNSSQSEVFIPFGVGPRMCVGMGVAKDELYYCASQMFMNFKWSPVNDKPIDDEGVARIALEYKEYQVVLERRK.

Residues 1–17 form a helical membrane-spanning segment; sequence MYLILSLIIFLAYVAFH. C438 is a binding site for heme.

Belongs to the cytochrome P450 family. It depends on heme as a cofactor.

The protein localises to the membrane. The protein is Probable cytochrome P450 516B1 (cyp516B1) of Dictyostelium discoideum (Social amoeba).